The sequence spans 149 residues: Ribonuclease HI (149 aa).

One can recognise an RNase H type-1 domain in the interval 1–140; sequence MIIGYFDGLC…AYELVRRGKL (140 aa). Mg(2+) contacts are provided by Asp-7, Glu-52, Asp-76, and Asp-125. Residues Asp-7, Glu-52, Asp-76, and Asp-125 each contribute to the Mn(2+) site. An intrachain disulfide couples Cys-58 to Cys-145.

Monomer. Mn(2+) serves as cofactor. It depends on Mg(2+) as a cofactor. Co(2+) is required as a cofactor. Requires Ni(2+) as cofactor. Post-translationally, the disulfide bond confers considerable stability to the protein.

The protein resides in the cytoplasm. The catalysed reaction is Endonucleolytic cleavage to 5'-phosphomonoester.. Nuclease that specifically degrades the RNA of RNA-DNA hybrids. Endonucleolytically removes RNA primers from the Okazaki fragments of lagging strand synthesis on its own. In the presence of Mn(2+) or Co(2+) can also cleave an RNA-RNA hybrid; the dsRNase activity is 10- 100-fold lower than RNase H activity. Complements the temperature-sensitive phenotype of an E.coli double rnhA/rnhB (RNase H) disruption mutant. This Sulfurisphaera tokodaii (strain DSM 16993 / JCM 10545 / NBRC 100140 / 7) (Sulfolobus tokodaii) protein is Ribonuclease HI (rnhA).